A 973-amino-acid chain; its full sequence is Serine/threonine-protein kinase atg1 (973 aa).

In terms of domain architecture, Protein kinase spans 23 to 328 (YTRLDEIGRG…FPDFFQNGVI (306 aa)). Residues 29 to 37 (IGRGSFATV) and K52 each bind ATP. D166 (proton acceptor) is an active-site residue. Disordered regions lie at residues 338 to 446 (DDLP…PGRQ), 460 to 482 (RQKGRNTFSEGSPQIDRQADKLR), 523 to 587 (GNIS…QSPT), and 949 to 973 (PTPSANVPSKMASSNPVSVGATPPK). A compositionally biased stretch (polar residues) spans 387-407 (GLTQRPPSQNQRFGTPQTTTP). Over residues 523–537 (GNISRGAQTGALSRR) the composition is skewed to polar residues. The span at 566 to 582 (SRADSMHNRQGSYERRY) shows a compositional bias: basic and acidic residues. Residues 951–965 (PSANVPSKMASSNPV) show a composition bias toward polar residues.

The protein belongs to the protein kinase superfamily. Ser/Thr protein kinase family. APG1/unc-51/ULK1 subfamily. Homodimer. Forms a ternary complex with ATG13 and ATG17.

It localises to the cytoplasm. The protein localises to the preautophagosomal structure membrane. It catalyses the reaction L-seryl-[protein] + ATP = O-phospho-L-seryl-[protein] + ADP + H(+). The enzyme catalyses L-threonyl-[protein] + ATP = O-phospho-L-threonyl-[protein] + ADP + H(+). In terms of biological role, serine/threonine protein kinase involved in the cytoplasm to vacuole transport (Cvt) and found to be essential in autophagy, where it is required for the formation of autophagosomes. Involved in the clearance of protein aggregates which cannot be efficiently cleared by the proteasome. Required for selective autophagic degradation of the nucleus (nucleophagy) as well as for mitophagy which contributes to regulate mitochondrial quantity and quality by eliminating the mitochondria to a basal level to fulfill cellular energy requirements and preventing excess ROS production. Also involved in endoplasmic reticulum-specific autophagic process, in selective removal of ER-associated degradation (ERAD) substrates. Plays a key role in ATG9 and ATG23 cycling through the pre-autophagosomal structure and is necessary to promote ATG18 binding to ATG9 through phosphorylation of ATG9. Catalyzes phosphorylation of ATG4, decreasing the interaction between ATG4 and ATG8 and impairing deconjugation of PE-conjugated forms of ATG8. This Aspergillus fumigatus (strain ATCC MYA-4609 / CBS 101355 / FGSC A1100 / Af293) (Neosartorya fumigata) protein is Serine/threonine-protein kinase atg1.